Reading from the N-terminus, the 152-residue chain is Flagellar assembly factor FliW (152 aa).

The protein belongs to the FliW family. In terms of assembly, interacts with translational regulator CsrA and flagellin(s).

The protein resides in the cytoplasm. Acts as an anti-CsrA protein, binds CsrA and prevents it from repressing translation of its target genes, one of which is flagellin. Binds to flagellin and participates in the assembly of the flagellum. The protein is Flagellar assembly factor FliW of Caldicellulosiruptor bescii (strain ATCC BAA-1888 / DSM 6725 / KCTC 15123 / Z-1320) (Anaerocellum thermophilum).